The primary structure comprises 117 residues: Big defensin (117 aa).

The N-terminal stretch at 1–23 is a signal peptide; that stretch reads MEKKTAYCLLFLVLLVPYTALGA. Residues 24–33 constitute a propeptide that is removed on maturation; that stretch reads VLKRAPAKKE. Cystine bridges form between cysteine 82–cysteine 112, cysteine 89–cysteine 107, and cysteine 93–cysteine 113.

This sequence belongs to the big defensin family.

It is found in the secreted. Significantly inhibits the growth of Gram-negative and Gram-positive bacteria and fungi in vitro. The polypeptide is Big defensin (Branchiostoma belcheri (Amphioxus)).